The chain runs to 127 residues: Thioredoxin domain-containing protein 8 (127 aa).

One can recognise a Thioredoxin domain in the interval 2–127 (VKRIKNMSEL…QLEKKIQELM (126 aa)). C32 and C35 are disulfide-bonded.

This sequence belongs to the thioredoxin family. Testis-specific. Only expressed during spermiogenesis, prominently in the Golgi apparatus of pachytene spermatocytes and round and elongated spermatids, with a transient localization in the developing acrosome of round spermatids (at protein level).

It localises to the cytoplasm. It is found in the golgi apparatus. In terms of biological role, may be required for post-translational modifications of proteins required for acrosomal biogenesis. May act by reducing disulfide bonds within the sperm. This Mus musculus (Mouse) protein is Thioredoxin domain-containing protein 8 (Txndc8).